A 172-amino-acid polypeptide reads, in one-letter code: MVDKRESYTKEDLLASGRGELFGAKGPQLPAPNMLMMDRVVKMTETGGNFDKGYVEAELDINPDLWFFGCHFIGDPVMPGCLGLDAMWQLVGFYLGWLGGEGKGRALGVGEVKFTGQVLPTAKKVTYRIHFKRIVNRRLIMGLADGEVLVDGRLIYTAHDLKVGLFQDTSAF.

The active site involves histidine 71.

It belongs to the thioester dehydratase family. FabA subfamily. In terms of assembly, homodimer.

It is found in the cytoplasm. It catalyses the reaction a (3R)-hydroxyacyl-[ACP] = a (2E)-enoyl-[ACP] + H2O. The catalysed reaction is (3R)-hydroxydecanoyl-[ACP] = (2E)-decenoyl-[ACP] + H2O. The enzyme catalyses (2E)-decenoyl-[ACP] = (3Z)-decenoyl-[ACP]. It participates in lipid metabolism; fatty acid biosynthesis. Its function is as follows. Necessary for the introduction of cis unsaturation into fatty acids. Catalyzes the dehydration of (3R)-3-hydroxydecanoyl-ACP to E-(2)-decenoyl-ACP and then its isomerization to Z-(3)-decenoyl-ACP. Can catalyze the dehydratase reaction for beta-hydroxyacyl-ACPs with saturated chain lengths up to 16:0, being most active on intermediate chain length. The protein is 3-hydroxydecanoyl-[acyl-carrier-protein] dehydratase of Salmonella arizonae (strain ATCC BAA-731 / CDC346-86 / RSK2980).